A 283-amino-acid chain; its full sequence is E3 ubiquitin-protein ligase SGR9, amyloplastic (283 aa).

An amyloplast-targeting transit peptide spans 1-32; the sequence is MEDENTTIIMASLSALSPSHLTNLTHSILSIS. The RING-type; atypical zinc-finger motif lies at 214-255; that stretch reads CVICKEEMSEGRDVCEMPCQHFFHWKCILPWLSKKNTCPFCR.

Post-translationally, auto-ubiquitinated as part of the enzymatic reaction. As to expression, expressed in seedlings, hypocotyls, roots and stems. Present especially in hypocotyl and inflorescence endodermis, as well as in root cap columella, tissues that act as statocytes.

It localises to the plastid. The protein resides in the amyloplast. It carries out the reaction S-ubiquitinyl-[E2 ubiquitin-conjugating enzyme]-L-cysteine + [acceptor protein]-L-lysine = [E2 ubiquitin-conjugating enzyme]-L-cysteine + N(6)-ubiquitinyl-[acceptor protein]-L-lysine.. The protein operates within protein modification; protein ubiquitination. Its function is as follows. E3 ubiquitin-protein ligase which accepts ubiquitin from an E2 ubiquitin-conjugating enzyme in the form of a thioester and then directly transfers the ubiquitin to targeted substrates. Modulates amyloplast dynamics and sedimentation in statocytes during inflorescence, hypocotyl and root gravitropism, probably by regulating amyloplast interaction with actin filaments (AFs) in endodermal cells. The chain is E3 ubiquitin-protein ligase SGR9, amyloplastic (SGR9) from Arabidopsis thaliana (Mouse-ear cress).